The primary structure comprises 345 residues: GDSL esterase/lipase At1g23500 (345 aa).

A signal peptide spans 1-24; the sequence is MNFSLLSTMLMALSSVCLFFVGYA. Ser42 serves as the catalytic Nucleophile. Residue Asn103 is glycosylated (N-linked (GlcNAc...) asparagine). Active-site residues include Asp320 and His323.

Belongs to the 'GDSL' lipolytic enzyme family.

It is found in the secreted. The protein is GDSL esterase/lipase At1g23500 of Arabidopsis thaliana (Mouse-ear cress).